Consider the following 1017-residue polypeptide: Anaphase-promoting complex subunit 5 (1017 aa).

5 TPR repeats span residues 30-63, 182-214, 252-286, 337-370, and 508-541; these read KQSLSHLLIRHIKENNYQDTVKEVSLYDFIEKEL, DMSMDQEQQQQQQEDYNEISNYENKIKFLSPLD, VKRVHLISLLFNIGYQDYDQSLEDLHRYFDYVNGQ, PYAVLNLVRLHYHFGHYEESYLALREAIRIAQER, and NNNNNNNNNNNSSNSNNNGGVNMFGKSFHLWNDI. A compositionally biased stretch (low complexity) spans 451 to 525; the sequence is INSNNYNSNN…NNNSSNSNNN (75 aa). Disordered stretches follow at residues 451-527 and 617-636; these read INSN…NNGG and NNNNNNNNNNNQIKQQQQQN. 5 TPR repeats span residues 642–675, 756–790, 838–871, 876–908, and 931–964; these read LLSFCKLALLYSKKSKYNEAIQILIKCFSIYKTQ, VICYQKIIKYYCNVRGMYEKSMNLIVKGIQISRDF, ADSNIALIKIHLSTDRLDKAITLIKETLPMVLSD, SQLYLLWAKSLISTSTKQSIDYLNRSEQLFLQL, and KEIYYLKSIIYNDLGDIENRNLYAKKFKSILVPS.

It belongs to the APC5 family. As to quaternary structure, the APC/C is composed of at least 13 subunits that stay tightly associated throughout the cell cycle: anapc1, anapc2, anapc3, anapc4, anapc5, anapc6, anapc7, anapc8, anapc10, anapc11, cdc20, cdc26 and cdh1.

It localises to the nucleus. It functions in the pathway protein modification; protein ubiquitination. In terms of biological role, component of the anaphase promoting complex/cyclosome (APC/C), a cell cycle-regulated E3 ubiquitin-protein ligase complex that controls progression through mitosis and the G1 phase of the cell cycle. In Dictyostelium discoideum (Social amoeba), this protein is Anaphase-promoting complex subunit 5 (anapc5).